The sequence spans 39 residues: Photosystem II reaction center protein Y (39 aa).

The chain crosses the membrane as a helical span at residues 7–25 (VLVVLLPVLLAGGWALKNI).

This sequence belongs to the PsbY family. As to quaternary structure, PSII is composed of 1 copy each of membrane proteins PsbA, PsbB, PsbC, PsbD, PsbE, PsbF, PsbH, PsbI, PsbJ, PsbK, PsbL, PsbM, PsbT, PsbX, PsbY, PsbZ, Psb30/Ycf12, peripheral proteins PsbO, CyanoQ (PsbQ), PsbU, PsbV and a large number of cofactors. It forms dimeric complexes.

It localises to the cellular thylakoid membrane. Functionally, loosely associated component of the core of photosystem II (PSII), it is not always seen in crystals. PSII is a light-driven water plastoquinone oxidoreductase, using light energy to abstract electrons from H(2)O, generating a proton gradient subsequently used for ATP formation. This Cyanothece sp. (strain PCC 7425 / ATCC 29141) protein is Photosystem II reaction center protein Y.